Consider the following 460-residue polypeptide: Serine--tRNA ligase (460 aa).

242–244 (TAE) provides a ligand contact to L-serine. Residues 273–275 (RRE) and Val289 contribute to the ATP site. Glu296 provides a ligand contact to L-serine. 369-372 (EVSS) is an ATP binding site. An L-serine-binding site is contributed by Ser405.

Belongs to the class-II aminoacyl-tRNA synthetase family. Type-1 seryl-tRNA synthetase subfamily. As to quaternary structure, homodimer. The tRNA molecule binds across the dimer.

Its subcellular location is the cytoplasm. The catalysed reaction is tRNA(Ser) + L-serine + ATP = L-seryl-tRNA(Ser) + AMP + diphosphate + H(+). It catalyses the reaction tRNA(Sec) + L-serine + ATP = L-seryl-tRNA(Sec) + AMP + diphosphate + H(+). The protein operates within aminoacyl-tRNA biosynthesis; selenocysteinyl-tRNA(Sec) biosynthesis; L-seryl-tRNA(Sec) from L-serine and tRNA(Sec): step 1/1. Functionally, catalyzes the attachment of serine to tRNA(Ser). Is also able to aminoacylate tRNA(Sec) with serine, to form the misacylated tRNA L-seryl-tRNA(Sec), which will be further converted into selenocysteinyl-tRNA(Sec). The sequence is that of Serine--tRNA ligase from Haloquadratum walsbyi (strain DSM 16790 / HBSQ001).